The primary structure comprises 141 residues: Hemoglobin subunit alpha (141 aa).

A Globin domain is found at 1 to 141; the sequence is VLSSKDKANI…VSTVLTSKYR (141 aa). A Phosphoserine modification is found at Ser3. N6-succinyllysine occurs at positions 7 and 11. Lys16 bears the N6-acetyllysine; alternate mark. Lys16 carries the post-translational modification N6-succinyllysine; alternate. Position 24 is a phosphotyrosine (Tyr24). Lys40 carries the N6-succinyllysine modification. The residue at position 49 (Ser49) is a Phosphoserine. O2 is bound at residue His58. His87 contributes to the heme b binding site. Ser102 is modified (phosphoserine). Thr108 is subject to Phosphothreonine. Ser124 carries the phosphoserine modification. Residues Thr134 and Thr137 each carry the phosphothreonine modification. The residue at position 138 (Ser138) is a Phosphoserine.

The protein belongs to the globin family. In terms of assembly, heterotetramer of two alpha chains and two beta chains. As to expression, red blood cells.

Functionally, involved in oxygen transport from the lung to the various peripheral tissues. Its function is as follows. Hemopressin acts as an antagonist peptide of the cannabinoid receptor CNR1. Hemopressin-binding efficiently blocks cannabinoid receptor CNR1 and subsequent signaling. This is Hemoglobin subunit alpha (HBA) from Lama glama (Llama).